The primary structure comprises 458 residues: NADH-quinone oxidoreductase subunit N (458 aa).

Helical transmembrane passes span 4 to 24, 30 to 50, 62 to 82, 94 to 114, 118 to 138, 153 to 173, 194 to 214, 235 to 255, 261 to 281, 290 to 310, 318 to 338, 361 to 381, 397 to 417, and 438 to 458; these read LLPEITLTLIALLGQFFAVII, IISNIIILLCILSIFLTFKYS, GINIGISKSIVLLFTIISMII, LKFEFITLILLSVVGIFVAIS, FLLLFCGMELTALTSYALAGF, FILGSLVSCLSLFGISFIYGF, LGLIIGIVLFLSSIFFKLSSV, FTAASKIGMVIVLLNISKLII, INYNLIKIIAILSMLFGAFGA, LMAYSTILNIGYVLIGVLLHN, LLYILIYAVGSIGFFTCLIML, IAAIISIVMFSMIGIPPLTGF, FILAYCGIFTSVVAAFYYLKV, and LLLINYLVVGFLLLGSFIISF.

Belongs to the complex I subunit 2 family. In terms of assembly, NDH-1 is composed of 14 different subunits. Subunits NuoA, H, J, K, L, M, N constitute the membrane sector of the complex.

The protein localises to the cell inner membrane. It catalyses the reaction a quinone + NADH + 5 H(+)(in) = a quinol + NAD(+) + 4 H(+)(out). In terms of biological role, NDH-1 shuttles electrons from NADH, via FMN and iron-sulfur (Fe-S) centers, to quinones in the respiratory chain. The immediate electron acceptor for the enzyme in this species is believed to be ubiquinone. Couples the redox reaction to proton translocation (for every two electrons transferred, four hydrogen ions are translocated across the cytoplasmic membrane), and thus conserves the redox energy in a proton gradient. The polypeptide is NADH-quinone oxidoreductase subunit N (Rickettsia felis (strain ATCC VR-1525 / URRWXCal2) (Rickettsia azadi)).